A 276-amino-acid polypeptide reads, in one-letter code: Putative translation initiation factor eIF-2B subunit 2-like (276 aa).

The protein belongs to the eIF-2B alpha/beta/delta subunits family. As to quaternary structure, complex of two different subunits.

Catalyzes the exchange of initiation factor 2-bound GDP for GTP. The polypeptide is Putative translation initiation factor eIF-2B subunit 2-like (Pyrococcus furiosus (strain ATCC 43587 / DSM 3638 / JCM 8422 / Vc1)).